The following is a 245-amino-acid chain: MMSTHPKPSYRRILLKLSGEALMGDEPFGIDAKVLDRMAQEIKELVELGVQVGLVIGGGNLFRGEGLAKAGMNRVVGDHMGMLATVMNGLAMRDALHRAFVNARLMSAIELTGVCDSYNWAEAISLLKSGRVVIFSAGTGNPFFTTDSAACLRGIEIEAEVVLKGTKVDGVYSDDPVSNPDATLYKHINYDDILEKQLKVMDLAAFTLARDHALPIRVFNMNKPGALRAVIMGEEEGTLISKNAE.

16 to 19 (KLSG) serves as a coordination point for ATP. Position 58 (Gly-58) interacts with UMP. 2 residues coordinate ATP: Gly-59 and Arg-63. UMP is bound by residues Asp-78 and 139–146 (TGNPFFTT). Residues Thr-166, Tyr-172, and Asp-175 each coordinate ATP.

Belongs to the UMP kinase family. As to quaternary structure, homohexamer.

It is found in the cytoplasm. It catalyses the reaction UMP + ATP = UDP + ADP. The protein operates within pyrimidine metabolism; CTP biosynthesis via de novo pathway; UDP from UMP (UMPK route): step 1/1. Its activity is regulated as follows. Inhibited by UTP. Catalyzes the reversible phosphorylation of UMP to UDP. This Idiomarina loihiensis (strain ATCC BAA-735 / DSM 15497 / L2-TR) protein is Uridylate kinase.